The sequence spans 166 residues: MADTARARRLAKRIAQIVASGLEYEVKDPRLAMVTITDARVTPDLRDATVYYTVFGDDADHASTAAALASATGVLRSRVGQQTGVRFTPTLTFVADTVPDDARRLDELLAQAREADAEVARLASTAEHAGDADPYRVDTEDDDDDTDGADAEARSDADVRRGPQSG.

Positions 122-166 (LASTAEHAGDADPYRVDTEDDDDDTDGADAEARSDADVRRGPQSG) are disordered. Positions 128-138 (HAGDADPYRVD) are enriched in basic and acidic residues. The span at 139–150 (TEDDDDDTDGAD) shows a compositional bias: acidic residues. The segment covering 151–166 (AEARSDADVRRGPQSG) has biased composition (basic and acidic residues).

The protein belongs to the RbfA family. In terms of assembly, monomer. Binds 30S ribosomal subunits, but not 50S ribosomal subunits or 70S ribosomes.

The protein localises to the cytoplasm. In terms of biological role, one of several proteins that assist in the late maturation steps of the functional core of the 30S ribosomal subunit. Associates with free 30S ribosomal subunits (but not with 30S subunits that are part of 70S ribosomes or polysomes). Required for efficient processing of 16S rRNA. May interact with the 5'-terminal helix region of 16S rRNA. This is Ribosome-binding factor A from Saccharopolyspora erythraea (strain ATCC 11635 / DSM 40517 / JCM 4748 / NBRC 13426 / NCIMB 8594 / NRRL 2338).